Reading from the N-terminus, the 80-residue chain is U19-lycotoxin-Ls1a (80 aa).

An N-terminal signal peptide occupies residues 1–22 (MSPKVQALIFIVGLITLLAAHA). The propeptide occupies 23 to 34 (QEELSDNIESER). Intrachain disulfides connect cysteine 36/cysteine 50, cysteine 43/cysteine 55, cysteine 49/cysteine 66, and cysteine 57/cysteine 64.

This sequence belongs to the neurotoxin 02 (plectoxin) family. 05 (U19-lycotoxin) subfamily. In terms of tissue distribution, expressed by the venom gland.

It is found in the secreted. This chain is U19-lycotoxin-Ls1a, found in Lycosa singoriensis (Wolf spider).